A 505-amino-acid chain; its full sequence is NADH-quinone oxidoreductase subunit N 1 (505 aa).

A run of 14 helical transmembrane segments spans residues 18 to 38 (LIPE…EMVL), 45 to 65 (LIAT…AWDF), 84 to 104 (YVGQ…SILA), 116 to 136 (IEFY…AQAN), 138 to 158 (FVLF…LVSY), 173 to 193 (LIMG…LYGV), 223 to 243 (FLAA…IGAF), 271 to 291 (AGFA…WWLV), 292 to 312 (QPVL…AALT), 319 to 339 (LIGL…IASH), 345 to 365 (VGAV…VFGV), 391 to 411 (FLAA…PLAG), 429 to 449 (GLLA…FGWI), and 473 to 493 (VGAA…LFGV).

It belongs to the complex I subunit 2 family. In terms of assembly, NDH-1 is composed of 14 different subunits. Subunits NuoA, H, J, K, L, M, N constitute the membrane sector of the complex.

It localises to the cell inner membrane. The catalysed reaction is a quinone + NADH + 5 H(+)(in) = a quinol + NAD(+) + 4 H(+)(out). Functionally, NDH-1 shuttles electrons from NADH, via FMN and iron-sulfur (Fe-S) centers, to quinones in the respiratory chain. The immediate electron acceptor for the enzyme in this species is believed to be ubiquinone. Couples the redox reaction to proton translocation (for every two electrons transferred, four hydrogen ions are translocated across the cytoplasmic membrane), and thus conserves the redox energy in a proton gradient. The chain is NADH-quinone oxidoreductase subunit N 1 from Opitutus terrae (strain DSM 11246 / JCM 15787 / PB90-1).